A 472-amino-acid chain; its full sequence is Trigger factor (472 aa).

The PPIase FKBP-type domain occupies Gly172–Gln257. Composition is skewed to polar residues over residues Asn439–Ser449 and Lys461–Lys472. Residues Asn439–Lys472 form a disordered region.

Belongs to the FKBP-type PPIase family. Tig subfamily.

It localises to the cytoplasm. The enzyme catalyses [protein]-peptidylproline (omega=180) = [protein]-peptidylproline (omega=0). In terms of biological role, involved in protein export. Acts as a chaperone by maintaining the newly synthesized protein in an open conformation. Functions as a peptidyl-prolyl cis-trans isomerase. The polypeptide is Trigger factor (Ureaplasma urealyticum serovar 10 (strain ATCC 33699 / Western)).